Here is a 291-residue protein sequence, read N- to C-terminus: Isopentenyl-diphosphate Delta-isomerase I, chloroplastic (291 aa).

The N-terminal 52 residues, 1–52 (MSTASLFSFPSFHLRSLLPSLSSSSSSSSSRFAPPRLSPIRSPAPRTQLSVR), are a transit peptide targeting the chloroplast. An N-acetylthreonine modification is found at Ser2. Over residues 20–39 (SLSSSSSSSSSRFAPPRLSP) the composition is skewed to low complexity. Residues 20–43 (SLSSSSSSSSSRFAPPRLSPIRSP) are disordered. Lys95 serves as a coordination point for substrate. The Mg(2+) site is built by His99 and His111. The region spanning 109–261 (LLHRAFSVFL…AVKLSPWFRL (153 aa)) is the Nudix hydrolase domain. Residues Arg130 and Lys134 each coordinate substrate. Residue Cys146 is part of the active site. Ser147 lines the substrate pocket. The Nudix box signature appears at 147 to 177 (SHPLYRESELIEENVLGVRNAAQRKLFDELG). Mg(2+) is bound by residues Glu206 and Glu208. Glu208 is a catalytic residue.

It belongs to the IPP isomerase type 1 family. Requires Mg(2+) as cofactor.

The protein resides in the plastid. The protein localises to the chloroplast. Its subcellular location is the cytoplasm. It catalyses the reaction isopentenyl diphosphate = dimethylallyl diphosphate. It functions in the pathway isoprenoid biosynthesis; dimethylallyl diphosphate biosynthesis; dimethylallyl diphosphate from isopentenyl diphosphate: step 1/1. The protein operates within porphyrin-containing compound metabolism; chlorophyll biosynthesis. In terms of biological role, catalyzes the 1,3-allylic rearrangement of the homoallylic substrate isopentenyl (IPP) to its highly electrophilic allylic isomer, dimethylallyl diphosphate (DMAPP). In Arabidopsis thaliana (Mouse-ear cress), this protein is Isopentenyl-diphosphate Delta-isomerase I, chloroplastic (IPP1).